The sequence spans 474 residues: Fumarate hydratase class II (474 aa).

Substrate-binding positions include 104–106 (SGT), 128–131 (HPND), 138–140 (SSN), and threonine 186. Histidine 187 functions as the Proton donor/acceptor in the catalytic mechanism. Serine 318 is an active-site residue. Substrate contacts are provided by residues serine 319 and 324 to 326 (KVN).

This sequence belongs to the class-II fumarase/aspartase family. Fumarase subfamily. Homotetramer.

It localises to the cytoplasm. The enzyme catalyses (S)-malate = fumarate + H2O. The protein operates within carbohydrate metabolism; tricarboxylic acid cycle; (S)-malate from fumarate: step 1/1. Functionally, involved in the TCA cycle. Catalyzes the stereospecific interconversion of fumarate to L-malate. This is Fumarate hydratase class II from Mycobacterium bovis (strain ATCC BAA-935 / AF2122/97).